Consider the following 344-residue polypeptide: tRNA N6-adenosine threonylcarbamoyltransferase (344 aa).

Fe cation is bound by residues H111 and H115. Residues 134–138, D167, G180, and N273 each bind substrate; that span reads LVSGG. Fe cation is bound at residue D301.

Belongs to the KAE1 / TsaD family. Requires Fe(2+) as cofactor.

The protein resides in the cytoplasm. The catalysed reaction is L-threonylcarbamoyladenylate + adenosine(37) in tRNA = N(6)-L-threonylcarbamoyladenosine(37) in tRNA + AMP + H(+). Its function is as follows. Required for the formation of a threonylcarbamoyl group on adenosine at position 37 (t(6)A37) in tRNAs that read codons beginning with adenine. Is involved in the transfer of the threonylcarbamoyl moiety of threonylcarbamoyl-AMP (TC-AMP) to the N6 group of A37, together with TsaE and TsaB. TsaD likely plays a direct catalytic role in this reaction. The chain is tRNA N6-adenosine threonylcarbamoyltransferase from Cupriavidus taiwanensis (strain DSM 17343 / BCRC 17206 / CCUG 44338 / CIP 107171 / LMG 19424 / R1) (Ralstonia taiwanensis (strain LMG 19424)).